Consider the following 109-residue polypeptide: U4-lycotoxin-Ls1d (109 aa).

Positions 1 to 22 (MKVLVLFSVLFLTLFSYSSTEA) are cleaved as a signal peptide. A propeptide spanning residues 23 to 44 (MDEFDSDAEEDMLSLMANEQVR) is cleaved from the precursor. Positions 45–88 (AKACTPRLHDCSHDRHSCCRGELFKDVCYCFYPEGEDKTEVCSC) are knottin domain. Disulfide bonds link C48-C63, C55-C72, C62-C88, and C74-C86. Residues 89-108 (QQPKSHKYIEKVVDKARTVV) form a linear cationic cytotoxin domain region.

The protein belongs to the neurotoxin 19 (CSTX) family. 05 (U4-Lctx) subfamily. As to expression, expressed by the venom gland.

Its subcellular location is the secreted. Functionally, enhances the high-affinity desensitization of human P2RX3 purinoceptors. The sequence is that of U4-lycotoxin-Ls1d from Lycosa singoriensis (Wolf spider).